The primary structure comprises 397 residues: Serpin-Z7 (397 aa).

Ala2 bears the N-acetylalanine mark. Positions 344 to 368 (GTKAGAATGDVIVDRSLPIRMDFVA) are RCL.

It belongs to the serpin family. Highly expressed in endosperm, at intermediate level in embryo and at lower levels in roots.

Its function is as follows. Inhibits chymotrypsin in vitro. This Hordeum vulgare (Barley) protein is Serpin-Z7 (PAZ7).